Consider the following 258-residue polypeptide: UPF0246 protein Sden_2729 (258 aa).

Belongs to the UPF0246 family.

The polypeptide is UPF0246 protein Sden_2729 (Shewanella denitrificans (strain OS217 / ATCC BAA-1090 / DSM 15013)).